The sequence spans 208 residues: Large ribosomal subunit protein uL3 (208 aa).

Positions 117-147 (FQGVIKRHGQSRGPMAHGSRYHRRPGSMGPV) are disordered.

It belongs to the universal ribosomal protein uL3 family. Part of the 50S ribosomal subunit. Forms a cluster with proteins L14 and L19.

Functionally, one of the primary rRNA binding proteins, it binds directly near the 3'-end of the 23S rRNA, where it nucleates assembly of the 50S subunit. This chain is Large ribosomal subunit protein uL3, found in Streptococcus equi subsp. zooepidemicus (strain H70).